A 345-amino-acid polypeptide reads, in one-letter code: Protein CHROMOSOME TRANSMISSION FIDELITY 7 (345 aa).

Residues R96 to H120 form a CCHH-type zinc finger.

The protein belongs to the acetyltransferase family. ECO subfamily. In terms of processing, autoacetylated. As to expression, expressed in roots, stems, leaves, young seedlings and flower buds. Detected in the embryo, but not in the endosperm.

The protein resides in the nucleus. The protein localises to the cytoplasm. Acetyltransferase required for the establishment of sister chromatid cohesion. Involved in preservation of genome integrity and meiosis. Required for DNA repair and for the regulation of chromosome segregation during mitotic cell division. Knock-down mutants are extremely dwarf. Regulator of sister chromatid cohesion in meiosis which negatively regulates cohesin association with chromatin, acting as an antagonist of WAPL1 and WAPL2. The sequence is that of Protein CHROMOSOME TRANSMISSION FIDELITY 7 from Arabidopsis thaliana (Mouse-ear cress).